We begin with the raw amino-acid sequence, 583 residues long: MDLWHIFLERILVACRVSASVFANFGCGLYSSWKLICGDHDSASGLRAGLATPTQRGKATGDNGTTGTPARTIGKPQARIATAMSTATCARFCTPLSSGTAGSTSKLTTGNGSGNTMTSAYKIPSNNSTTANDSSNTETTFTFKLGRSNGRSSSNVASSESSDPLESDYSEEDPEQEQQRPDPATNSRSSSTATTTTTSSADHDNDVDEEDEEDDENEGEGNGRDADDATHDSSESIEEDDGNETDDEEDDDESEESSSVQTAKGVRKYHLDDYQIIKTVGTGTFGRVCLCRDRISEKYCAMKILAMTEVIRLKQIEHVKNERNILREIRHPFVISLEWSTKDDSNLYMIFDYVCGGELFTYLRNAGKFTSQTSNFYAAEIVSALEYLHSLQIVYRDLKPENLLINRDGHLKITDFGFAKKLRDRTWTLCGTPEYIAPEIIQSKGHNKAVDWWALGVLIYEMLVGYPPFYDEQPFGIYEKILSGKIEWERHMDPIAKDLIKKLLVNDRTKRLGNMKNGADDVKRHRWFKHLNWNDVYSKKLKPPILPDVHHDGDTKNFDDYPEKDWKPAKAVDQRDLQYFNDF.

2 disordered regions span residues Ala-51–Lys-75 and Ser-98–Lys-264. 2 stretches are compositionally biased toward polar residues: residues Thr-52 to Pro-69 and Ser-98 to Leu-107. Over residues Thr-108–Ser-162 the composition is skewed to low complexity. Residues Asp-163–Gln-176 show a composition bias toward acidic residues. Positions Pro-181–Ser-200 are enriched in low complexity. Residues Asn-205–Gly-219 show a composition bias toward acidic residues. The span at Gly-221 to Ser-234 shows a compositional bias: basic and acidic residues. The segment covering Glu-235–Glu-256 has biased composition (acidic residues). Positions Tyr-274–Phe-528 constitute a Protein kinase domain. Residues Val-280–Val-288 and Lys-303 contribute to the ATP site. Residue Asp-397 is the Proton acceptor of the active site. The AGC-kinase C-terminal domain maps to Lys-529 to Phe-583.

It belongs to the protein kinase superfamily. AGC Ser/Thr protein kinase family. cAMP subfamily. Expressed in embryonic mesoderm, and the optic lamina, wing disk and leg disks of third instar larvae. More abundant in adult head than adult body.

The enzyme catalyses L-seryl-[protein] + ATP = O-phospho-L-seryl-[protein] + ADP + H(+). It carries out the reaction L-threonyl-[protein] + ATP = O-phospho-L-threonyl-[protein] + ADP + H(+). Does not have an essential role in development. The chain is cAMP-dependent protein kinase catalytic subunit 3 (Pka-C3) from Drosophila melanogaster (Fruit fly).